The chain runs to 220 residues: MTRRELARMIDHTLLKPDATEAQIRQLCAEGREHGFMSVCVNPYWVPLCAELLSGTEVKVCTTIGFPLGANRSEIKAVEAEDAVARGAREVDMVINVGALKSGRRDVVLNDIRAVVSAVAGEALVKVIIETGLLTDEEKVIACQLAQEAGADFVKTSTGFGTGGATVHDIALMRRTVGAGMGVKASGGVRDLETALAMIGAGANRIGASAGVAILAGLEA.

Asp92 functions as the Proton donor/acceptor in the catalytic mechanism. The active-site Schiff-base intermediate with acetaldehyde is Lys155. Lys184 acts as the Proton donor/acceptor in catalysis.

The protein belongs to the DeoC/FbaB aldolase family. DeoC type 1 subfamily.

It localises to the cytoplasm. It carries out the reaction 2-deoxy-D-ribose 5-phosphate = D-glyceraldehyde 3-phosphate + acetaldehyde. It participates in carbohydrate degradation; 2-deoxy-D-ribose 1-phosphate degradation; D-glyceraldehyde 3-phosphate and acetaldehyde from 2-deoxy-alpha-D-ribose 1-phosphate: step 2/2. Its function is as follows. Catalyzes a reversible aldol reaction between acetaldehyde and D-glyceraldehyde 3-phosphate to generate 2-deoxy-D-ribose 5-phosphate. The polypeptide is Deoxyribose-phosphate aldolase (Symbiobacterium thermophilum (strain DSM 24528 / JCM 14929 / IAM 14863 / T)).